The chain runs to 135 residues: ATP synthase epsilon chain, chloroplastic (135 aa).

The protein belongs to the ATPase epsilon chain family. F-type ATPases have 2 components, CF(1) - the catalytic core - and CF(0) - the membrane proton channel. CF(1) has five subunits: alpha(3), beta(3), gamma(1), delta(1), epsilon(1). CF(0) has three main subunits: a, b and c.

It is found in the plastid. Its subcellular location is the chloroplast thylakoid membrane. Produces ATP from ADP in the presence of a proton gradient across the membrane. In Stigeoclonium helveticum (Green alga), this protein is ATP synthase epsilon chain, chloroplastic.